A 353-amino-acid polypeptide reads, in one-letter code: Photosystem II protein D1 (353 aa).

T2 is subject to N-acetylthreonine. T2 bears the Phosphothreonine mark. A run of 3 helical transmembrane segments spans residues 29–46, 118–133, and 142–156; these read YIGWFGVLMIPTLLTATS, HFLLGVACYMGREWEL, and WIAVAYSAPVAAATA. H118 contacts chlorophyll a. Y126 contacts pheophytin a. The [CaMn4O5] cluster site is built by D170 and E189. Residues 197 to 218 form a helical membrane-spanning segment; it reads FHMLGVAGVFGGSLFSAMHGSL. H198 provides a ligand contact to chlorophyll a. A quinone is bound by residues H215 and 264–265; that span reads SF. H215 lines the Fe cation pocket. H272 provides a ligand contact to Fe cation. Residues 274 to 288 form a helical membrane-spanning segment; it reads FLAAWPVVGIWFTAL. The [CaMn4O5] cluster site is built by H332, E333, D342, and A344. A propeptide spanning residues 345–353 is cleaved from the precursor; sequence AIEAPSTNG.

This sequence belongs to the reaction center PufL/M/PsbA/D family. In terms of assembly, PSII is composed of 1 copy each of membrane proteins PsbA, PsbB, PsbC, PsbD, PsbE, PsbF, PsbH, PsbI, PsbJ, PsbK, PsbL, PsbM, PsbT, PsbX, PsbY, PsbZ, Psb30/Ycf12, at least 3 peripheral proteins of the oxygen-evolving complex and a large number of cofactors. It forms dimeric complexes. Requires The D1/D2 heterodimer binds P680, chlorophylls that are the primary electron donor of PSII, and subsequent electron acceptors. It shares a non-heme iron and each subunit binds pheophytin, quinone, additional chlorophylls, carotenoids and lipids. D1 provides most of the ligands for the Mn4-Ca-O5 cluster of the oxygen-evolving complex (OEC). There is also a Cl(-1) ion associated with D1 and D2, which is required for oxygen evolution. The PSII complex binds additional chlorophylls, carotenoids and specific lipids. as cofactor. Tyr-161 forms a radical intermediate that is referred to as redox-active TyrZ, YZ or Y-Z. Post-translationally, C-terminally processed by CTPA; processing is essential to allow assembly of the oxygen-evolving complex and thus photosynthetic growth.

It localises to the plastid. It is found in the chloroplast thylakoid membrane. It carries out the reaction 2 a plastoquinone + 4 hnu + 2 H2O = 2 a plastoquinol + O2. Photosystem II (PSII) is a light-driven water:plastoquinone oxidoreductase that uses light energy to abstract electrons from H(2)O, generating O(2) and a proton gradient subsequently used for ATP formation. It consists of a core antenna complex that captures photons, and an electron transfer chain that converts photonic excitation into a charge separation. The D1/D2 (PsbA/PsbD) reaction center heterodimer binds P680, the primary electron donor of PSII as well as several subsequent electron acceptors. The sequence is that of Photosystem II protein D1 from Gossypium barbadense (Sea Island cotton).